Reading from the N-terminus, the 306-residue chain is Phosphoribosylaminoimidazole-succinocarboxamide synthase (306 aa).

Ser2 is modified (N-acetylserine).

It belongs to the SAICAR synthetase family. Monomer.

It carries out the reaction 5-amino-1-(5-phospho-D-ribosyl)imidazole-4-carboxylate + L-aspartate + ATP = (2S)-2-[5-amino-1-(5-phospho-beta-D-ribosyl)imidazole-4-carboxamido]succinate + ADP + phosphate + 2 H(+). It functions in the pathway purine metabolism; IMP biosynthesis via de novo pathway; 5-amino-1-(5-phospho-D-ribosyl)imidazole-4-carboxamide from 5-amino-1-(5-phospho-D-ribosyl)imidazole-4-carboxylate: step 1/2. Its function is as follows. Catalyzes the reaction of 4-carboxy-5-aminoimidazole ribotide (CAIR) and aspartic acid with the formation of N-succinyl-5-amino-imidazole-4-carboxamide ribotide (SAICAR) in the purine biosynthesis pathway. In Saccharomyces cerevisiae (strain ATCC 204508 / S288c) (Baker's yeast), this protein is Phosphoribosylaminoimidazole-succinocarboxamide synthase (ADE1).